The primary structure comprises 500 residues: NAD(P)H-quinone oxidoreductase chain 4, chloroplastic (500 aa).

Transmembrane regions (helical) follow at residues 4–24, 35–55, 87–107, 113–130, 134–154, 167–187, 208–228, 242–262, 274–294, 305–325, 330–350, 386–406, 416–436, and 463–483; these read FPWL…IFFL, YTMG…CYHF, IGPI…AWPV, LFHF…GLFS, LLLF…LLSM, FILY…GMGL, GLEI…LPII, HYST…YGLI, SIFS…AALT, IAYS…SLTN, GAIL…FLGG, LALP…GIIT, IIIT…LLSM, and FVSI…DLVI.

This sequence belongs to the complex I subunit 4 family.

The protein resides in the plastid. The protein localises to the chloroplast thylakoid membrane. The catalysed reaction is a plastoquinone + NADH + (n+1) H(+)(in) = a plastoquinol + NAD(+) + n H(+)(out). The enzyme catalyses a plastoquinone + NADPH + (n+1) H(+)(in) = a plastoquinol + NADP(+) + n H(+)(out). The polypeptide is NAD(P)H-quinone oxidoreductase chain 4, chloroplastic (Lemna minor (Common duckweed)).